A 513-amino-acid polypeptide reads, in one-letter code: 2-isopropylmalate synthase (513 aa).

Residues 5 to 268 form the Pyruvate carboxyltransferase domain; that stretch reads LIIFDTTLRD…DVGVDTSQIV (264 aa). Positions 14, 202, 204, and 239 each coordinate Mn(2+). The tract at residues 394–513 is regulatory domain; the sequence is RFISLSQRSE…KAVQKINPQI (120 aa).

This sequence belongs to the alpha-IPM synthase/homocitrate synthase family. LeuA type 1 subfamily. In terms of assembly, homodimer. The cofactor is Mn(2+).

It localises to the cytoplasm. The enzyme catalyses 3-methyl-2-oxobutanoate + acetyl-CoA + H2O = (2S)-2-isopropylmalate + CoA + H(+). Its pathway is amino-acid biosynthesis; L-leucine biosynthesis; L-leucine from 3-methyl-2-oxobutanoate: step 1/4. In terms of biological role, catalyzes the condensation of the acetyl group of acetyl-CoA with 3-methyl-2-oxobutanoate (2-ketoisovalerate) to form 3-carboxy-3-hydroxy-4-methylpentanoate (2-isopropylmalate). This is 2-isopropylmalate synthase from Cupriavidus pinatubonensis (strain JMP 134 / LMG 1197) (Cupriavidus necator (strain JMP 134)).